The chain runs to 513 residues: ATP synthase subunit alpha 2 (513 aa).

Position 169-176 (169-176) interacts with ATP; sequence GDRQTGKT.

It belongs to the ATPase alpha/beta chains family. In terms of assembly, F-type ATPases have 2 components, CF(1) - the catalytic core - and CF(0) - the membrane proton channel. CF(1) has five subunits: alpha(3), beta(3), gamma(1), delta(1), epsilon(1). CF(0) has three main subunits: a(1), b(2) and c(9-12). The alpha and beta chains form an alternating ring which encloses part of the gamma chain. CF(1) is attached to CF(0) by a central stalk formed by the gamma and epsilon chains, while a peripheral stalk is formed by the delta and b chains.

It localises to the cell inner membrane. The catalysed reaction is ATP + H2O + 4 H(+)(in) = ADP + phosphate + 5 H(+)(out). In terms of biological role, produces ATP from ADP in the presence of a proton gradient across the membrane. The alpha chain is a regulatory subunit. The polypeptide is ATP synthase subunit alpha 2 (Pseudoalteromonas atlantica (strain T6c / ATCC BAA-1087)).